Here is a 138-residue protein sequence, read N- to C-terminus: HHSKHHATYVKGANDALEKLEEARAKDDQSTVLLNEKNLAFNLAGHVNHTIWWKNLSPNGGDKPTGELAAAIDDAFGSFDKFRAQFHAAATTVQGSGWAALGWDNLGEKLLIFQVYDHQSNFPLGVVPLLLLDMWEHA.

The Mn(2+) site is built by histidine 1, histidine 49, aspartate 133, and histidine 137.

It belongs to the iron/manganese superoxide dismutase family. Mn(2+) serves as cofactor.

It catalyses the reaction 2 superoxide + 2 H(+) = H2O2 + O2. Destroys superoxide anion radicals which are normally produced within the cells and which are toxic to biological systems. This is Superoxide dismutase [Mn] (sodA) from Mycobacterium celatum.